A 636-amino-acid chain; its full sequence is Translation factor GUF1 homolog, chloroplastic (636 aa).

A tr-type G domain is found at 31 to 212 (NLARNFSIIA…AIVTKIPPPQ (182 aa)). GTP is bound by residues 40-47 (AHIDHGKS), 105-109 (DTPGH), and 159-162 (NKID).

The protein belongs to the TRAFAC class translation factor GTPase superfamily. Classic translation factor GTPase family. LepA subfamily.

It localises to the plastid. The protein resides in the chloroplast. The enzyme catalyses GTP + H2O = GDP + phosphate + H(+). Its function is as follows. Promotes chloroplast protein synthesis. May act as a fidelity factor of the translation reaction, by catalyzing a one-codon backward translocation of tRNAs on improperly translocated ribosomes. The protein is Translation factor GUF1 homolog, chloroplastic of Oryza sativa subsp. indica (Rice).